The sequence spans 220 residues: DNA mismatch repair protein MutH (220 aa).

Belongs to the MutH family.

The protein resides in the cytoplasm. In terms of biological role, sequence-specific endonuclease that cleaves unmethylated GATC sequences. It is involved in DNA mismatch repair. This chain is DNA mismatch repair protein MutH, found in Buchnera aphidicola subsp. Baizongia pistaciae (strain Bp).